The primary structure comprises 217 residues: Ribonuclease T (217 aa).

In terms of domain architecture, Exonuclease spans 20-194; the sequence is VVIDIETAGF…YDTQQTANLF (175 aa). Residues Asp-23, Glu-25, His-181, and Asp-186 each coordinate Mg(2+). The Proton donor/acceptor role is filled by His-181.

It belongs to the RNase T family. Homodimer. Mg(2+) serves as cofactor.

Trims short 3' overhangs of a variety of RNA species, leaving a one or two nucleotide 3' overhang. Responsible for the end-turnover of tRNA: specifically removes the terminal AMP residue from uncharged tRNA (tRNA-C-C-A). Also appears to be involved in tRNA biosynthesis. In Buchnera aphidicola subsp. Baizongia pistaciae (strain Bp), this protein is Ribonuclease T.